We begin with the raw amino-acid sequence, 62 residues long: Photosystem II reaction center protein Z (62 aa).

2 consecutive transmembrane segments (helical) span residues 8–28 and 41–61; these read AVFA…VVFA and FSGT…NSLI.

This sequence belongs to the PsbZ family. As to quaternary structure, PSII is composed of 1 copy each of membrane proteins PsbA, PsbB, PsbC, PsbD, PsbE, PsbF, PsbH, PsbI, PsbJ, PsbK, PsbL, PsbM, PsbT, PsbY, PsbZ, Psb30/Ycf12, at least 3 peripheral proteins of the oxygen-evolving complex and a large number of cofactors. It forms dimeric complexes.

Its subcellular location is the plastid. It is found in the chloroplast thylakoid membrane. Functionally, may control the interaction of photosystem II (PSII) cores with the light-harvesting antenna, regulates electron flow through the 2 photosystem reaction centers. PSII is a light-driven water plastoquinone oxidoreductase, using light energy to abstract electrons from H(2)O, generating a proton gradient subsequently used for ATP formation. This chain is Photosystem II reaction center protein Z, found in Arabidopsis thaliana (Mouse-ear cress).